A 371-amino-acid chain; its full sequence is Transaldolase (371 aa).

The active-site Schiff-base intermediate with substrate is lysine 140.

The protein belongs to the transaldolase family. Type 2 subfamily.

The protein resides in the cytoplasm. It catalyses the reaction D-sedoheptulose 7-phosphate + D-glyceraldehyde 3-phosphate = D-erythrose 4-phosphate + beta-D-fructose 6-phosphate. It participates in carbohydrate degradation; pentose phosphate pathway; D-glyceraldehyde 3-phosphate and beta-D-fructose 6-phosphate from D-ribose 5-phosphate and D-xylulose 5-phosphate (non-oxidative stage): step 2/3. Transaldolase is important for the balance of metabolites in the pentose-phosphate pathway. In Arthrobacter sp. (strain FB24), this protein is Transaldolase.